Consider the following 678-residue polypeptide: DNA ligase (678 aa).

NAD(+) contacts are provided by residues Asp-36–Asp-40, Ser-85–Leu-86, and Glu-117. The active-site N6-AMP-lysine intermediate is the Lys-119. NAD(+) is bound by residues Arg-140, Glu-177, Lys-294, and Lys-318. Cys-412, Cys-415, Cys-430, and Cys-436 together coordinate Zn(2+). Positions Ala-595–Val-678 constitute a BRCT domain.

The protein belongs to the NAD-dependent DNA ligase family. LigA subfamily. Requires Mg(2+) as cofactor. It depends on Mn(2+) as a cofactor.

It catalyses the reaction NAD(+) + (deoxyribonucleotide)n-3'-hydroxyl + 5'-phospho-(deoxyribonucleotide)m = (deoxyribonucleotide)n+m + AMP + beta-nicotinamide D-nucleotide.. Functionally, DNA ligase that catalyzes the formation of phosphodiester linkages between 5'-phosphoryl and 3'-hydroxyl groups in double-stranded DNA using NAD as a coenzyme and as the energy source for the reaction. It is essential for DNA replication and repair of damaged DNA. This chain is DNA ligase, found in Marinobacter nauticus (strain ATCC 700491 / DSM 11845 / VT8) (Marinobacter aquaeolei).